The following is a 239-amino-acid chain: MKAPKALTAEEREKVEAVIGYHFIGKERLDKALTHSSARPAKGSDYERLEFLGDRVLGLCVAEHLFKVFRAATEGELSVRLNQLVSAETCAAVADEIQLHRYIRTGADVKKLTDKNMLNVRADVVESLIAAIYLDAGLEAARAFVLKFWAERASRQDAGRRDAKTELQEWAHAKFAVTPVYRVADRSGPDHDPSFTVTVEIGKLEPETGIDRSKRAAEQAAATRLLEREGVWTRSTASD.

Residues arginine 12–glycine 137 enclose the RNase III domain. Glutamate 50 is a Mg(2+) binding site. Aspartate 54 is an active-site residue. Mg(2+)-binding residues include aspartate 123 and glutamate 126. Residue glutamate 126 is part of the active site. Residues aspartate 162 to valine 231 form the DRBM domain.

Belongs to the ribonuclease III family. In terms of assembly, homodimer. Mg(2+) is required as a cofactor.

Its subcellular location is the cytoplasm. The enzyme catalyses Endonucleolytic cleavage to 5'-phosphomonoester.. Functionally, digests double-stranded RNA. Involved in the processing of primary rRNA transcript to yield the immediate precursors to the large and small rRNAs (23S and 16S). Processes some mRNAs, and tRNAs when they are encoded in the rRNA operon. Processes pre-crRNA and tracrRNA of type II CRISPR loci if present in the organism. This is Ribonuclease 3 from Allorhizobium ampelinum (strain ATCC BAA-846 / DSM 112012 / S4) (Agrobacterium vitis (strain S4)).